We begin with the raw amino-acid sequence, 691 residues long: Two-component response regulator ORR21 (691 aa).

Positions 17–132 (KVLVVDDDPT…ELKNIWQHVI (116 aa)) constitute a Response regulatory domain. Aspartate 68 is subject to 4-aspartylphosphate. Over residues 139–155 (NKEHEHSGSLDDTDRTR) the composition is skewed to basic and acidic residues. 2 disordered regions span residues 139–204 (NKEH…KKPR) and 616–647 (SHPG…HGFV). Residues 199–258 (TSKKPRVVWSVELHQQFVNAVNHLGIDKAVPKKILELMNVPGLTRENVASHLQKFRLYLK) constitute a DNA-binding region (myb-like GARP). Over residues 616–628 (SHPGSSSSSFQSS) the composition is skewed to low complexity.

Belongs to the ARR family. Type-B subfamily. Post-translationally, two-component system major event consists of a His-to-Asp phosphorelay between a sensor histidine kinase (HK) and a response regulator (RR). In plants, the His-to-Asp phosphorelay involves an additional intermediate named Histidine-containing phosphotransfer protein (HPt). This multistep phosphorelay consists of a His-Asp-His-Asp sequential transfer of a phosphate group between first a His and an Asp of the HK protein, followed by the transfer to a conserved His of the HPt protein and finally the transfer to an Asp in the receiver domain of the RR protein.

Its subcellular location is the nucleus. Transcriptional activator that binds specific DNA sequence. Functions as a response regulator involved in His-to-Asp phosphorelay signal transduction system. Phosphorylation of the Asp residue in the receiver domain activates the ability of the protein to promote the transcription of target genes. May directly activate some type-A response regulators in response to cytokinins. In Oryza sativa subsp. indica (Rice), this protein is Two-component response regulator ORR21.